Reading from the N-terminus, the 148-residue chain is Deoxyuridine 5'-triphosphate nucleotidohydrolase (148 aa).

Residues 68-70, N81, and 85-87 each bind substrate; these read RSG and TID.

The protein belongs to the dUTPase family. It depends on Mg(2+) as a cofactor.

It catalyses the reaction dUTP + H2O = dUMP + diphosphate + H(+). Its pathway is pyrimidine metabolism; dUMP biosynthesis; dUMP from dCTP (dUTP route): step 2/2. Functionally, this enzyme is involved in nucleotide metabolism: it produces dUMP, the immediate precursor of thymidine nucleotides and it decreases the intracellular concentration of dUTP so that uracil cannot be incorporated into DNA. This Geobacter metallireducens (strain ATCC 53774 / DSM 7210 / GS-15) protein is Deoxyuridine 5'-triphosphate nucleotidohydrolase.